Here is an 86-residue protein sequence, read N- to C-terminus: MSVKIRLKRMGAKKRPYYRIVVMNSTSPRDGRAIEELGYYHLIEKQNQLKIKEDRMKDWISKGAILSDTVKMLLKKNNLNAKSQEV.

This sequence belongs to the bacterial ribosomal protein bS16 family.

The chain is Small ribosomal subunit protein bS16 from Borreliella afzelii (strain PKo) (Borrelia afzelii).